The sequence spans 560 residues: Leiomodin-3 (560 aa).

The interval methionine 1–proline 49 is interaction with tropomyosin alpha. Positions glutamate 16–methionine 42 form a coiled coil. 2 disordered regions span residues aspartate 45–histidine 68 and isoleucine 127–aspartate 217. The span at glutamate 142–glutamate 167 shows a compositional bias: acidic residues. A compositionally biased stretch (basic and acidic residues) spans glutamate 168–arginine 182. Residues asparagine 183–threonine 192 are compositionally biased toward polar residues. Over residues lysine 194–aspartate 217 the composition is skewed to basic and acidic residues. Positions valine 386–glycine 425 form a coiled coil. Disordered regions lie at residues proline 437–threonine 480 and glutamine 494–valine 530. Over residues glutamine 448–glutamine 458 the composition is skewed to pro residues. A compositionally biased stretch (basic and acidic residues) spans arginine 498–lysine 516. The 20-residue stretch at proline 534–valine 553 folds into the WH2 domain.

This sequence belongs to the tropomodulin family. May interact with tropomyosin alpha (TPM1/2) N-terminus. Interacts with KLHL40; leading to stabilization. Post-translationally, ubiquitinated, leading to its degradation. Interaction with KLHL40 negatively regulates ubiquitination and degradation. Expressed in cardiac and at higher levels in skeletal muscles (at protein level).

The protein resides in the cytoplasm. It localises to the myofibril. It is found in the sarcomere. Its subcellular location is the m line. The protein localises to the a band. The protein resides in the cytoskeleton. Essential for the organization of sarcomeric actin thin filaments in skeletal muscle. Increases the rate of actin polymerization. The protein is Leiomodin-3 (LMOD3) of Homo sapiens (Human).